Consider the following 146-residue polypeptide: Heat-stable 19 kDa antigen (146 aa).

Residues 1 to 20 (MKFSLLSAIAAAVFVPFTSA) form the signal peptide.

Belongs to the cerato-platanin family. Glycosylated.

It is found in the secreted. In Coccidioides posadasii (strain C735) (Valley fever fungus), this protein is Heat-stable 19 kDa antigen (CSA).